Reading from the N-terminus, the 227-residue chain is Probable septum site-determining protein MinC (227 aa).

This sequence belongs to the MinC family. As to quaternary structure, interacts with MinD and FtsZ.

In terms of biological role, cell division inhibitor that blocks the formation of polar Z ring septums. Rapidly oscillates between the poles of the cell to destabilize FtsZ filaments that have formed before they mature into polar Z rings. Prevents FtsZ polymerization. The protein is Probable septum site-determining protein MinC of Clostridioides difficile (strain 630) (Peptoclostridium difficile).